Consider the following 53-residue polypeptide: uncharacterized protein (53 aa).

Positions 14–33 (SPSSLNNNNNINSKSLQINS) are enriched in low complexity. The tract at residues 14 to 53 (SPSSLNNNNNINSKSLQINSENKSKIQNNNPLGNKGGVQF) is disordered.

This is an uncharacterized protein from Dictyostelium discoideum (Social amoeba).